We begin with the raw amino-acid sequence, 745 residues long: Serine/threonine-protein kinase GG21441 (745 aa).

The interval 49–73 is disordered; that stretch reads RNQQQNVQKDFDSHNRDCDSPVSST. Residues 57 to 67 show a composition bias toward basic and acidic residues; the sequence is KDFDSHNRDCD. Doublecortin domains follow at residues 159-245 and 315-398; these read LRIK…VEYN and RIVT…AEDF. The Protein kinase domain occupies 479-737; sequence YTLGRIIGDG…SEDILDHYWT (259 aa). Residues 485-493 and K508 each bind ATP; that span reads IGDGNFAIV. D600 acts as the Proton acceptor in catalysis.

It belongs to the protein kinase superfamily. CAMK Ser/Thr protein kinase family. CaMK subfamily.

It carries out the reaction L-seryl-[protein] + ATP = O-phospho-L-seryl-[protein] + ADP + H(+). The enzyme catalyses L-threonyl-[protein] + ATP = O-phospho-L-threonyl-[protein] + ADP + H(+). The sequence is that of Serine/threonine-protein kinase GG21441 from Drosophila erecta (Fruit fly).